The sequence spans 238 residues: Probable transcriptional regulatory protein YeeN (238 aa).

Belongs to the TACO1 family. YeeN subfamily.

It is found in the cytoplasm. The sequence is that of Probable transcriptional regulatory protein YeeN from Salmonella choleraesuis (strain SC-B67).